Reading from the N-terminus, the 427-residue chain is MAIESEVLVIGGGLAGITSALAAADAGADTRLVSYKQSTLRNASGLVDVLGYTPSGDGPVVDPFDAIPSLPDAHPYRTVGVDTVRDAMAFFDAHAPRYQGHHTDANALVPTHGGTVKPTARYPASAAAGLASDDRDTLLVGFETLPDFNADHAAAHLESAGVPFDVRGVTVPFPGDLRAGAKVTRYAGLLDANPQVSVDGTERPLRLALATRVADAAADADRVGFPAVLGDDDPAGVRDALADHLGAAVFEVPMGPPSLPGLRLSDHLFGALEAAGVRIETGNPVVDADTTAGGVETVYVEKNGARIPNSADEYVLATGGLVGKGIDSDRDAVYEPIFDCRIAHSDDRYAWFDDDAFGDHAFAQFGVRTDDTLRPRDDDGAAAHANLRAAGAVLGGYNFAAEHSGSGVSIATGYAAGTAAAEAIHDE.

This sequence belongs to the anaerobic G-3-P dehydrogenase subunit B family. Requires FMN as cofactor.

It carries out the reaction a quinone + sn-glycerol 3-phosphate = dihydroxyacetone phosphate + a quinol. It functions in the pathway polyol metabolism; glycerol degradation via glycerol kinase pathway; glycerone phosphate from sn-glycerol 3-phosphate (anaerobic route): step 1/1. The protein is Probable anaerobic glycerol-3-phosphate dehydrogenase subunit B of Halobacterium salinarum (strain ATCC 29341 / DSM 671 / R1).